Here is a 72-residue protein sequence, read N- to C-terminus: MNYLVMISFALLLVIGVESVRDGYFVEPDNCVVHCMPSSEMCDRGCKHNGATSGSCKAFSKGGNACWCKGLR.

A signal peptide spans 1–19; it reads MNYLVMISFALLLVIGVES. Residues 21–72 enclose the LCN-type CS-alpha/beta domain; that stretch reads RDGYFVEPDNCVVHCMPSSEMCDRGCKHNGATSGSCKAFSKGGNACWCKGLR. 3 disulfides stabilise this stretch: Cys35/Cys56, Cys42/Cys66, and Cys46/Cys68. A propeptide (removed by a carboxypeptidase) is located at residue Arg72.

It belongs to the long (3 C-C) scorpion toxin superfamily. In terms of tissue distribution, expressed by the venom gland.

The protein localises to the secreted. The sequence is that of Probable neurotoxin pcD-993 from Androctonus australis (Sahara scorpion).